The chain runs to 83 residues: MAKGQSLQDPFLNALRKERIPVSIYLVNGIKLQGQVESFDQFVILLKNTVSQMVYKHAISTVVPSRALPVAATNPHADADENQ.

One can recognise a Sm domain in the interval Asp9–Leu68.

It belongs to the Hfq family. Homohexamer.

Functionally, RNA chaperone that binds small regulatory RNA (sRNAs) and mRNAs to facilitate mRNA translational regulation in response to envelope stress, environmental stress and changes in metabolite concentrations. Also binds with high specificity to tRNAs. This Pseudoalteromonas atlantica (strain T6c / ATCC BAA-1087) protein is RNA-binding protein Hfq.